The following is a 98-amino-acid chain: Integration host factor subunit beta (98 aa).

Belongs to the bacterial histone-like protein family. As to quaternary structure, heterodimer of an alpha and a beta chain.

In terms of biological role, this protein is one of the two subunits of integration host factor, a specific DNA-binding protein that functions in genetic recombination as well as in transcriptional and translational control. The polypeptide is Integration host factor subunit beta (Pseudomonas fluorescens (strain Pf0-1)).